We begin with the raw amino-acid sequence, 1186 residues long: DNA-directed RNA polymerase subunit beta (1186 aa).

Positions Lys1149–Gln1186 are disordered.

This sequence belongs to the RNA polymerase beta chain family. In terms of assembly, the RNAP catalytic core consists of 2 alpha, 1 beta, 1 beta' and 1 omega subunit. When a sigma factor is associated with the core the holoenzyme is formed, which can initiate transcription.

It carries out the reaction RNA(n) + a ribonucleoside 5'-triphosphate = RNA(n+1) + diphosphate. Its function is as follows. DNA-dependent RNA polymerase catalyzes the transcription of DNA into RNA using the four ribonucleoside triphosphates as substrates. This Bifidobacterium adolescentis (strain ATCC 15703 / DSM 20083 / NCTC 11814 / E194a) protein is DNA-directed RNA polymerase subunit beta.